The primary structure comprises 70 residues: Movement protein TGBp3 (70 aa).

The Lumenal segment spans residues 1–4; that stretch reads MEAG. Residues 5 to 27 traverse the membrane as a helical segment; that stretch reads AYLNAIIFVLVATIIAVISRGLT. Residues 28–70 lie on the Cytoplasmic side of the membrane; the sequence is RTEPCTIRITGESITVHACHIDSETIKALANLKPLSLERLSFQ.

It belongs to the Tymovirales TGBp3 protein family.

It is found in the host endoplasmic reticulum membrane. In terms of biological role, plays a role in viral cell-to-cell propagation, by facilitating genome transport to neighboring plant cells through plasmosdesmata. May induce the formation of granular vesicles derived from the Endoplasmic reticulum, which align on actin filaments. This chain is Movement protein TGBp3, found in Potato virus X (strain CP) (PVX).